We begin with the raw amino-acid sequence, 120 residues long: Protein BEX4 (120 aa).

A disordered region spans residues M1–R54. The segment covering A8 to A27 has biased composition (low complexity). The tract at residues N31–I90 is interaction with SIRT2. The interval N31 to P120 is interaction with alpha-tubulin. C117 lines the Zn(2+) pocket.

The protein belongs to the BEX family. In terms of assembly, interacts with alpha-tubulin. Interacts with SIRT2. Post-translationally, ubiquitinated and degraded by the proteasome. Very high expression in heart, skeletal muscle, liver, and kidney. The levels of expression are uniform throughout the brain.

The protein localises to the cytoplasm. The protein resides in the cytoskeleton. It is found in the spindle pole. Its subcellular location is the nucleus. Its function is as follows. May play a role in microtubule deacetylation by negatively regulating the SIRT2 deacetylase activity toward alpha-tubulin and thereby participate in the control of cell cycle progression and genomic stability. In absence of reductive stress, acts as a pseudosubstrate for the CRL2(FEM1B) complex: associates with FEM1B via zinc, thereby preventing association between FEM1B and its substrates. This is Protein BEX4 from Homo sapiens (Human).